Here is a 173-residue protein sequence, read N- to C-terminus: NADH-ubiquinone oxidoreductase chain 6 (173 aa).

The next 5 helical transmembrane spans lie at 1-21, 27-47, 48-68, 87-107, and 139-159; these read MTYF…AVAS, YGVV…LSLG, VSFV…VVFV, VVGY…VGGL, and CGVG…FVVL.

Belongs to the complex I subunit 6 family.

The protein resides in the mitochondrion membrane. It carries out the reaction a ubiquinone + NADH + 5 H(+)(in) = a ubiquinol + NAD(+) + 4 H(+)(out). Its function is as follows. Core subunit of the mitochondrial membrane respiratory chain NADH dehydrogenase (Complex I) that is believed to belong to the minimal assembly required for catalysis. Complex I functions in the transfer of electrons from NADH to the respiratory chain. The immediate electron acceptor for the enzyme is believed to be ubiquinone. The sequence is that of NADH-ubiquinone oxidoreductase chain 6 (MT-ND6) from Synthliboramphus wumizusume (Japanese murrelet).